The chain runs to 710 residues: Protein Smaug homolog 1 (710 aa).

Disordered stretches follow at residues 276 to 319 (ARGS…FQDE) and 441 to 476 (NQAT…ESDL). Polar residues predominate over residues 309 to 318 (QSTACNTFQD). The region spanning 319 to 379 (EGSGMKDVPA…KIVISIQKLK (61 aa)) is the SAM domain.

This sequence belongs to the SMAUG family.

The protein localises to the cytoplasm. It is found in the cell projection. It localises to the dendrite. Its subcellular location is the synapse. The protein resides in the synaptosome. In terms of biological role, acts as a translational repressor. In Xenopus laevis (African clawed frog), this protein is Protein Smaug homolog 1 (samd4a).